The sequence spans 197 residues: Heart- and neural crest derivatives-expressed protein 1 (197 aa).

2 disordered regions span residues 61–94 (VVGP…RRTE) and 155–184 (VDGK…KGRT). A compositionally biased stretch (basic residues) spans 78–90 (LGRRKGAPPKKER). The 53-residue stretch at 80–132 (RRKGAPPKKERRRTESINSAFAELRECIPNVPADTKLSKIKTLRLATSYIGYL) folds into the bHLH domain.

In terms of assembly, efficient DNA binding requires dimerization with another bHLH protein. As to expression, highly expressed in the adult heart and expressed at lower levels in the intestine and gall bladder.

It is found in the nucleus. It localises to the nucleolus. In terms of biological role, plays an essential role in cardiac morphogenesis. This chain is Heart- and neural crest derivatives-expressed protein 1 (hand1), found in Xenopus laevis (African clawed frog).